Consider the following 158-residue polypeptide: Urease accessory protein UreE (158 aa).

This sequence belongs to the UreE family.

The protein localises to the cytoplasm. Functionally, involved in urease metallocenter assembly. Binds nickel. Probably functions as a nickel donor during metallocenter assembly. This Microcystis aeruginosa (strain NIES-843 / IAM M-2473) protein is Urease accessory protein UreE.